Here is a 547-residue protein sequence, read N- to C-terminus: Eukaryotic translation initiation factor 3 subunit D (547 aa).

Disordered stretches follow at residues 1 to 22 (MANF…PSTS) and 114 to 159 (SVRG…TRDS). Positions 126–148 (GRGGQRGGFSTRGGRGGARGGYG) are enriched in gly residues. The segment at 284-298 (PLDYITVNENAADPP) is RNA gate.

This sequence belongs to the eIF-3 subunit D family. Component of the eukaryotic translation initiation factor 3 (eIF-3) complex.

Its subcellular location is the cytoplasm. Functionally, mRNA cap-binding component of the eukaryotic translation initiation factor 3 (eIF-3) complex, which is involved in protein synthesis of a specialized repertoire of mRNAs and, together with other initiation factors, stimulates binding of mRNA and methionyl-tRNAi to the 40S ribosome. The eIF-3 complex specifically targets and initiates translation of a subset of mRNAs involved in cell proliferation. In the eIF-3 complex, eif3d specifically recognizes and binds the 7-methylguanosine cap of a subset of mRNAs. This is Eukaryotic translation initiation factor 3 subunit D from Cryptococcus neoformans var. neoformans serotype D (strain B-3501A) (Filobasidiella neoformans).